The sequence spans 101 residues: Small ribosomal subunit protein uS14 (101 aa).

Belongs to the universal ribosomal protein uS14 family. As to quaternary structure, part of the 30S ribosomal subunit. Contacts proteins S3 and S10.

Functionally, binds 16S rRNA, required for the assembly of 30S particles and may also be responsible for determining the conformation of the 16S rRNA at the A site. This chain is Small ribosomal subunit protein uS14, found in Escherichia coli O139:H28 (strain E24377A / ETEC).